The following is a 172-amino-acid chain: uncharacterized protein (172 aa).

The protein belongs to the flavoredoxin family. FMN is required as a cofactor.

This is an uncharacterized protein from Pyrococcus abyssi (strain GE5 / Orsay).